We begin with the raw amino-acid sequence, 742 residues long: Collectin-12 (742 aa).

Topologically, residues 1-37 (MKDDFAEEEEVQSFGYKRFGIQEGTQCTKCKNNWALK) are cytoplasmic. The helical; Signal-anchor for type II membrane protein transmembrane segment at 38–58 (FSIVLLYILCALLTITVAILG) threads the bilayer. At 59–742 (YKVVEKMDNV…EREAVPSSIL (684 aa)) the chain is on the extracellular side. N-linked (GlcNAc...) asparagine glycosylation is present at Asn-67. The stretch at 73–142 (ETSHQTYDNK…KDTLEKLQAN (70 aa)) forms a coiled coil. 2 N-linked (GlcNAc...) asparagine glycosylation sites follow: Asn-159 and Asn-168. Residues 205–254 (NLNNLNLTQVQQRNLISNLQQSVDDTSLAIQRIKNDFQNLQQVFLQAKKD) adopt a coiled-coil conformation. Asn-271 is a glycosylation site (N-linked (GlcNAc...) asparagine). Residues 439–608 (TILQGPPGPR…TPASEVNGCP (170 aa)) are disordered. 2 consecutive Collagen-like domains span residues 452–511 (GDRG…KGSR) and 527–586 (GPPG…PGPS). A compositionally biased stretch (low complexity) spans 501 to 514 (SKGSQGPKGSRGSP). The span at 516 to 532 (KPGPQGPSGDPGPPGPP) shows a compositional bias: pro residues. The segment covering 534–556 (KDGLPGPQGPPGFQGLQGTVGEP) has biased composition (low complexity). The span at 571 to 585 (PGMPGPKGPPGPPGP) shows a compositional bias: pro residues. 3 cysteine pairs are disulfide-bonded: Cys-607-Cys-618, Cys-635-Cys-730, and Cys-708-Cys-722. Residues 614-731 (FTDKCYYFSL…CDEINNFICE (118 aa)) enclose the C-type lectin domain. Ca(2+)-binding residues include Phe-644, Asn-646, Glu-650, Asp-670, and Glu-674. A carbohydrate is bound by residues Lys-691, Gln-694, and Asp-696. Positions 694, 696, 697, 706, 707, 718, 719, and 731 each coordinate Ca(2+). Glu-706 contributes to the a carbohydrate binding site. 2 residues coordinate a carbohydrate: Asn-718 and Asp-719.

In terms of assembly, the extracellular domain forms a stable trimer. The extracellular domain interacts with fibrillar amyloid-beta peptide. In terms of tissue distribution, expressed in vascular endothelial cells in the heart, in perivascular macrophage and smooth muscle cells. Expressed in plaques-surrounding reactive astrocytes located in cerebral cortex and hippocampus and in leptomeningeal vessels showing characteristics of cerebral amyloid angiopathy (CAA) in a double transgenic mouse model of Alzheimer disease (at protein level). Strongly expressed in lung. Moderately expressed in heart, skeletal muscle, spleen, liver, brain, colon, testis, stomach and kidney. Expressed in neonatal astrocytes. Expressed in reactive astrocytes and vascular/perivascular cells in the brain of a double transgenic mouse model of Alzheimer disease.

The protein localises to the membrane. Functionally, scavenger receptor that displays several functions associated with host defense. Promotes binding and phagocytosis of Gram-positive, Gram-negative bacteria and yeast. Also binds to sialyl Lewis X or a trisaccharide and asialo-orosomucoid (ASOR). Mediates the recognition, internalization and degradation of oxidatively modified low density lipoprotein (oxLDL) by vascular endothelial cells. Binds to several carbohydrates including Gal-type ligands, D-galactose, L- and D-fucose, GalNAc, T and Tn antigens in a calcium-dependent manner and internalizes specifically GalNAc in nurse-like cells. This chain is Collectin-12 (Colec12), found in Mus musculus (Mouse).